The sequence spans 342 residues: Dihydroorotase (342 aa).

The Zn(2+) site is built by histidine 13 and histidine 15. Residues histidine 15–arginine 17 and asparagine 41 each bind substrate. 3 residues coordinate Zn(2+): lysine 98, histidine 135, and histidine 173. Position 98 is an N6-carboxylysine (lysine 98). Histidine 135 is a substrate binding site. A substrate-binding site is contributed by leucine 218. A Zn(2+)-binding site is contributed by aspartate 246. Aspartate 246 is an active-site residue. Residues histidine 250 and alanine 262 each coordinate substrate.

The protein belongs to the metallo-dependent hydrolases superfamily. DHOase family. Class II DHOase subfamily. As to quaternary structure, homodimer. Requires Zn(2+) as cofactor.

The catalysed reaction is (S)-dihydroorotate + H2O = N-carbamoyl-L-aspartate + H(+). Its pathway is pyrimidine metabolism; UMP biosynthesis via de novo pathway; (S)-dihydroorotate from bicarbonate: step 3/3. Functionally, catalyzes the reversible cyclization of carbamoyl aspartate to dihydroorotate. This Vibrio vulnificus (strain YJ016) protein is Dihydroorotase.